We begin with the raw amino-acid sequence, 174 residues long: FAD synthase (174 aa).

Residues 34 to 35 (TF), 39 to 42 (HPGH), aspartate 119, and tyrosine 147 contribute to the ATP site.

Belongs to the archaeal FAD synthase family. Homodimer. A divalent metal cation serves as cofactor.

The catalysed reaction is FMN + ATP + H(+) = FAD + diphosphate. It functions in the pathway cofactor biosynthesis; FAD biosynthesis; FAD from FMN: step 1/1. Its function is as follows. Catalyzes the transfer of the AMP portion of ATP to flavin mononucleotide (FMN) to produce flavin adenine dinucleotide (FAD) coenzyme. The protein is FAD synthase of Methanococcus voltae (strain ATCC BAA-1334 / A3).